We begin with the raw amino-acid sequence, 179 residues long: Translationally-controlled tumor protein homolog (179 aa).

Positions 1 to 179 (MIIYKDIISG…WKHGLEEMKV (179 aa)) constitute a TCTP domain.

Belongs to the TCTP family.

Its subcellular location is the cytoplasm. It localises to the cytoskeleton. Functionally, involved in protein synthesis. Involved in microtubule stabilization. Involved in osmoadaptation. In Emericella nidulans (strain FGSC A4 / ATCC 38163 / CBS 112.46 / NRRL 194 / M139) (Aspergillus nidulans), this protein is Translationally-controlled tumor protein homolog.